The primary structure comprises 644 residues: Probable potassium transport system protein Kup 2 (644 aa).

Residues 1-21 (MSSDAAAVADRDGSSPGHGGH) are disordered. The next 12 membrane-spanning stretches (helical) occupy residues 26–46 (LGAM…TSPL), 69–89 (VLSL…VAII), 120–140 (IILL…ITPA), 155–175 (AGFA…LFMI), 183–203 (VGML…VLGT), 231–251 (LAFL…ALYA), 265–285 (WLVF…AMIL), 312–332 (LVIL…TGAF), 360–380 (IYIP…VMSF), 390–410 (YGIA…VVLI), 419–439 (LAAP…GANL), and 444–464 (DGGW…TTWG).

The protein belongs to the HAK/KUP transporter (TC 2.A.72) family.

It localises to the cell inner membrane. The enzyme catalyses K(+)(in) + H(+)(in) = K(+)(out) + H(+)(out). In terms of biological role, transport of potassium into the cell. Likely operates as a K(+):H(+) symporter. In Rhizorhabdus wittichii (strain DSM 6014 / CCUG 31198 / JCM 15750 / NBRC 105917 / EY 4224 / RW1) (Sphingomonas wittichii), this protein is Probable potassium transport system protein Kup 2.